Reading from the N-terminus, the 645-residue chain is 1,4-alpha-glucan branching enzyme GlgB (645 aa).

Aspartate 309 serves as the catalytic Nucleophile. Glutamate 352 (proton donor) is an active-site residue. The disordered stretch occupies residues 619 to 645; the sequence is VKTRKGSKKQDGSKTKVRSNVTSRGKR. Residues 636–645 show a composition bias toward polar residues; sequence RSNVTSRGKR.

Belongs to the glycosyl hydrolase 13 family. GlgB subfamily. As to quaternary structure, monomer.

The enzyme catalyses Transfers a segment of a (1-&gt;4)-alpha-D-glucan chain to a primary hydroxy group in a similar glucan chain.. It participates in glycan biosynthesis; glycogen biosynthesis. Functionally, catalyzes the formation of the alpha-1,6-glucosidic linkages in glycogen by scission of a 1,4-alpha-linked oligosaccharide from growing alpha-1,4-glucan chains and the subsequent attachment of the oligosaccharide to the alpha-1,6 position. The sequence is that of 1,4-alpha-glucan branching enzyme GlgB from Bacillus cereus (strain 03BB102).